A 317-amino-acid chain; its full sequence is Aspartate carbamoyltransferase catalytic subunit (317 aa).

Positions 66 and 67 each coordinate carbamoyl phosphate. Lys94 contributes to the L-aspartate binding site. Residues Arg116, His144, and Gln147 each contribute to the carbamoyl phosphate site. Positions 177 and 231 each coordinate L-aspartate. Residues Gly272 and Pro273 each coordinate carbamoyl phosphate.

The protein belongs to the aspartate/ornithine carbamoyltransferase superfamily. ATCase family. As to quaternary structure, heterododecamer (2C3:3R2) of six catalytic PyrB chains organized as two trimers (C3), and six regulatory PyrI chains organized as three dimers (R2).

The enzyme catalyses carbamoyl phosphate + L-aspartate = N-carbamoyl-L-aspartate + phosphate + H(+). It participates in pyrimidine metabolism; UMP biosynthesis via de novo pathway; (S)-dihydroorotate from bicarbonate: step 2/3. Functionally, catalyzes the condensation of carbamoyl phosphate and aspartate to form carbamoyl aspartate and inorganic phosphate, the committed step in the de novo pyrimidine nucleotide biosynthesis pathway. This is Aspartate carbamoyltransferase catalytic subunit from Rhodopseudomonas palustris (strain ATCC BAA-98 / CGA009).